We begin with the raw amino-acid sequence, 597 residues long: Replication protein E1 (597 aa).

A Nuclear localization signal motif is present at residues 75-77; it reads KRK. Phosphoserine; by host occurs at positions 81, 91, and 104. A Nuclear export signal motif is present at residues 90-99; the sequence is LSPQLASISL. Residues 119-141 form a disordered region; the sequence is QSSNEADDSLEGQRQVEPLPGRE. A DNA-binding region region spans residues 137–300; sequence LPGREENGAD…TLITHHLAAE (164 aa). In terms of domain architecture, SF3 helicase spans 400 to 550; the sequence is IEFILFLADF…FPLDDNGNPG (151 aa). 426 to 433 is a binding site for ATP; sequence GPPNTGKS. Lysine 507 is covalently cross-linked (Glycyl lysine isopeptide (Lys-Gly) (interchain with G-Cter in SUMO)). Positions 574 to 597 are disordered; sequence PEDGEDGETQRGLRLTARGTTESV.

The protein belongs to the papillomaviridae E1 protein family. In terms of assembly, can form hexamers. Interacts with E2 protein; this interaction increases E1 DNA binding specificity. Interacts with host DNA polymerase subunit POLA2. Interacts with host single stranded DNA-binding protein RPA1. Interacts with host TOP1; this interaction stimulates the enzymatic activity of TOP1. Phosphorylated. Post-translationally, sumoylated.

Its subcellular location is the host nucleus. It carries out the reaction Couples ATP hydrolysis with the unwinding of duplex DNA by translocating in the 3'-5' direction.. The catalysed reaction is ATP + H2O = ADP + phosphate + H(+). Functionally, ATP-dependent DNA 3'-5' helicase required for initiation of viral DNA replication. It forms a complex with the viral E2 protein. The E1-E2 complex binds to the replication origin which contains binding sites for both proteins. During the initial step, a dimer of E1 interacts with a dimer of protein E2 leading to a complex that binds the viral origin of replication with high specificity. Then, a second dimer of E1 displaces the E2 dimer in an ATP-dependent manner to form the E1 tetramer. Following this, two E1 monomers are added to each half of the site, which results in the formation of two E1 trimers on the viral ori. Subsequently, two hexamers will be created. The double hexamer acts as a bi-directional helicase machinery and unwinds the viral DNA and then recruits the host DNA polymerase to start replication. This is Replication protein E1 from Canis lupus familiaris (Dog).